A 258-amino-acid polypeptide reads, in one-letter code: Pimeloyl-[acyl-carrier protein] methyl ester esterase (258 aa).

One can recognise an AB hydrolase-1 domain in the interval 16-242 (LVLLHGWGLN…AAHAPFISHP (227 aa)). Substrate is bound by residues tryptophan 22, 82–83 (SL), and 143–147 (FLALQ). The active-site Nucleophile is serine 82. Catalysis depends on residues aspartate 207 and histidine 235. Residue histidine 235 participates in substrate binding.

This sequence belongs to the AB hydrolase superfamily. Carboxylesterase BioH family. As to quaternary structure, monomer.

It is found in the cytoplasm. The enzyme catalyses 6-carboxyhexanoyl-[ACP] methyl ester + H2O = 6-carboxyhexanoyl-[ACP] + methanol + H(+). It functions in the pathway cofactor biosynthesis; biotin biosynthesis. In terms of biological role, the physiological role of BioH is to remove the methyl group introduced by BioC when the pimeloyl moiety is complete. It allows to synthesize pimeloyl-ACP via the fatty acid synthetic pathway through the hydrolysis of the ester bonds of pimeloyl-ACP esters. The polypeptide is Pimeloyl-[acyl-carrier protein] methyl ester esterase (Edwardsiella ictaluri (strain 93-146)).